An 892-amino-acid polypeptide reads, in one-letter code: Gamma-tubulin small complex component GCP3 (892 aa).

The protein belongs to the TUBGCP family. As to quaternary structure, component of the gamma-tubulin small complex (gamma-TuSC) composed of tubulin gamma chain, gamma-tubulin complex protein 2 (GCP2) and gamma-tubulin complex protein 3 (GCP3). Interacts with tubulin gamma chain.

The protein localises to the cytoplasm. Its subcellular location is the cytoskeleton. It localises to the flagellum axoneme. The protein resides in the flagellum basal body. Its function is as follows. Component of the gamma-tubulin small complex (gamma-TuSC) involved in microtubule (MT) nucleation for the formation of median bodies and in the biogenesis of flagella. Gamma-TuSC may be required for the correct positioning of EB1 within the trophozoites. This chain is Gamma-tubulin small complex component GCP3, found in Giardia intestinalis (strain ATCC 50803 / WB clone C6) (Giardia lamblia).